The primary structure comprises 89 residues: Small ribosomal subunit protein uS17 (89 aa).

It belongs to the universal ribosomal protein uS17 family. In terms of assembly, part of the 30S ribosomal subunit.

Its function is as follows. One of the primary rRNA binding proteins, it binds specifically to the 5'-end of 16S ribosomal RNA. The protein is Small ribosomal subunit protein uS17 of Albidiferax ferrireducens (strain ATCC BAA-621 / DSM 15236 / T118) (Rhodoferax ferrireducens).